We begin with the raw amino-acid sequence, 243 residues long: Probable fructoselysine utilization operon transcriptional repressor (243 aa).

Residues 10–78 (QLLYATVRQR…QGKGTFVQSQ (69 aa)) enclose the HTH gntR-type domain. The H-T-H motif DNA-binding region spans 38-57 (ENELCTQYNVSRITIRKAIS).

It functions in the pathway carbohydrate metabolism; fructoselysine degradation [regulation]. May regulate the transcription of the frlABCDR operon, involved in the utilization of fructoselysine and psicoselysine. In Escherichia coli O157:H7, this protein is Probable fructoselysine utilization operon transcriptional repressor (frlR).